A 290-amino-acid chain; its full sequence is Porphobilinogen deaminase (290 aa).

Cysteine 237 carries the post-translational modification S-(dipyrrolylmethanemethyl)cysteine.

The protein belongs to the HMBS family. Monomer. Dipyrromethane is required as a cofactor.

It carries out the reaction 4 porphobilinogen + H2O = hydroxymethylbilane + 4 NH4(+). It participates in porphyrin-containing compound metabolism; protoporphyrin-IX biosynthesis; coproporphyrinogen-III from 5-aminolevulinate: step 2/4. Tetrapolymerization of the monopyrrole PBG into the hydroxymethylbilane pre-uroporphyrinogen in several discrete steps. This Clostridium botulinum (strain Langeland / NCTC 10281 / Type F) protein is Porphobilinogen deaminase.